The following is a 199-amino-acid chain: Recombination protein RecR (199 aa).

The C4-type zinc finger occupies 58–73 (CSVCNNITDVDPCVFC). The Toprim domain maps to 81–176 (RLVCVVEEPT…RLTRIATGVP (96 aa)).

It belongs to the RecR family.

Its function is as follows. May play a role in DNA repair. It seems to be involved in an RecBC-independent recombinational process of DNA repair. It may act with RecF and RecO. This chain is Recombination protein RecR, found in Acidobacterium capsulatum (strain ATCC 51196 / DSM 11244 / BCRC 80197 / JCM 7670 / NBRC 15755 / NCIMB 13165 / 161).